Reading from the N-terminus, the 259-residue chain is UPF0246 protein PA14_18590 (259 aa).

This sequence belongs to the UPF0246 family.

This is UPF0246 protein PA14_18590 from Pseudomonas aeruginosa (strain UCBPP-PA14).